Reading from the N-terminus, the 415-residue chain is Serine/threonine transporter SstT (415 aa).

Helical transmembrane passes span Ile23–Ala43, Leu47–Val67, Ile85–Phe105, Ala144–Leu164, Ala181–Val201, Leu220–Phe240, Gly303–Val323, and Val333–Ile353.

The protein belongs to the dicarboxylate/amino acid:cation symporter (DAACS) (TC 2.A.23) family.

The protein resides in the cell inner membrane. The catalysed reaction is L-serine(in) + Na(+)(in) = L-serine(out) + Na(+)(out). The enzyme catalyses L-threonine(in) + Na(+)(in) = L-threonine(out) + Na(+)(out). Functionally, involved in the import of serine and threonine into the cell, with the concomitant import of sodium (symport system). The protein is Serine/threonine transporter SstT of Cronobacter sakazakii (strain ATCC BAA-894) (Enterobacter sakazakii).